The primary structure comprises 149 residues: 3-dehydroquinate dehydratase (149 aa).

The active-site Proton acceptor is the Tyr-22. Substrate contacts are provided by Asn-74, His-80, and Asp-87. Catalysis depends on His-100, which acts as the Proton donor. Substrate contacts are provided by residues 101-102 (LS) and Arg-111.

The protein belongs to the type-II 3-dehydroquinase family. Homododecamer.

The enzyme catalyses 3-dehydroquinate = 3-dehydroshikimate + H2O. Its pathway is metabolic intermediate biosynthesis; chorismate biosynthesis; chorismate from D-erythrose 4-phosphate and phosphoenolpyruvate: step 3/7. Functionally, catalyzes a trans-dehydration via an enolate intermediate. This chain is 3-dehydroquinate dehydratase, found in Vesicomyosocius okutanii subsp. Calyptogena okutanii (strain HA).